The following is a 308-amino-acid chain: Aspartate carbamoyltransferase catalytic subunit (308 aa).

The carbamoyl phosphate site is built by Arg-55 and Thr-56. Residue Lys-83 coordinates L-aspartate. The carbamoyl phosphate site is built by Arg-105, His-133, and Gln-136. L-aspartate-binding residues include Arg-166 and Arg-223. Residues Gly-264 and Pro-265 each coordinate carbamoyl phosphate.

Belongs to the aspartate/ornithine carbamoyltransferase superfamily. ATCase family. Heterododecamer (2C3:3R2) of six catalytic PyrB chains organized as two trimers (C3), and six regulatory PyrI chains organized as three dimers (R2).

The catalysed reaction is carbamoyl phosphate + L-aspartate = N-carbamoyl-L-aspartate + phosphate + H(+). The protein operates within pyrimidine metabolism; UMP biosynthesis via de novo pathway; (S)-dihydroorotate from bicarbonate: step 2/3. Functionally, catalyzes the condensation of carbamoyl phosphate and aspartate to form carbamoyl aspartate and inorganic phosphate, the committed step in the de novo pyrimidine nucleotide biosynthesis pathway. The polypeptide is Aspartate carbamoyltransferase catalytic subunit (Salinispora tropica (strain ATCC BAA-916 / DSM 44818 / JCM 13857 / NBRC 105044 / CNB-440)).